The chain runs to 354 residues: 3-dehydroquinate synthase (354 aa).

NAD(+) contacts are provided by residues 66–71, 100–104, 124–125, Lys-137, and Lys-146; these read DGERYK, GVVGD, and TT. Zn(2+) is bound by residues Glu-179, His-242, and His-259.

Belongs to the sugar phosphate cyclases superfamily. Dehydroquinate synthase family. Co(2+) serves as cofactor. Zn(2+) is required as a cofactor. Requires NAD(+) as cofactor.

Its subcellular location is the cytoplasm. The enzyme catalyses 7-phospho-2-dehydro-3-deoxy-D-arabino-heptonate = 3-dehydroquinate + phosphate. It participates in metabolic intermediate biosynthesis; chorismate biosynthesis; chorismate from D-erythrose 4-phosphate and phosphoenolpyruvate: step 2/7. Catalyzes the conversion of 3-deoxy-D-arabino-heptulosonate 7-phosphate (DAHP) to dehydroquinate (DHQ). The chain is 3-dehydroquinate synthase from Halorhodospira halophila (strain DSM 244 / SL1) (Ectothiorhodospira halophila (strain DSM 244 / SL1)).